A 206-amino-acid chain; its full sequence is Ribosomal RNA large subunit methyltransferase E (206 aa).

5 residues coordinate S-adenosyl-L-methionine: glycine 55, tryptophan 57, aspartate 75, aspartate 91, and aspartate 116. Lysine 156 serves as the catalytic Proton acceptor.

It belongs to the class I-like SAM-binding methyltransferase superfamily. RNA methyltransferase RlmE family.

It localises to the cytoplasm. It carries out the reaction uridine(2552) in 23S rRNA + S-adenosyl-L-methionine = 2'-O-methyluridine(2552) in 23S rRNA + S-adenosyl-L-homocysteine + H(+). Specifically methylates the uridine in position 2552 of 23S rRNA at the 2'-O position of the ribose in the fully assembled 50S ribosomal subunit. In Blochmanniella floridana, this protein is Ribosomal RNA large subunit methyltransferase E.